An 876-amino-acid chain; its full sequence is Valine--tRNA ligase (876 aa).

The short motif at 44–54 is the 'HIGH' region element; that stretch reads PNVTGKLHLGH. The short motif at 520–524 is the 'KMSKS' region element; the sequence is KMSKS. Residue Lys523 participates in ATP binding. Residues 805–876 are a coiled coil; sequence LEGLIDMDKE…VKNRIEQLKA (72 aa).

The protein belongs to the class-I aminoacyl-tRNA synthetase family. ValS type 1 subfamily. As to quaternary structure, monomer.

The protein resides in the cytoplasm. The catalysed reaction is tRNA(Val) + L-valine + ATP = L-valyl-tRNA(Val) + AMP + diphosphate. Its function is as follows. Catalyzes the attachment of valine to tRNA(Val). As ValRS can inadvertently accommodate and process structurally similar amino acids such as threonine, to avoid such errors, it has a 'posttransfer' editing activity that hydrolyzes mischarged Thr-tRNA(Val) in a tRNA-dependent manner. In Staphylococcus haemolyticus (strain JCSC1435), this protein is Valine--tRNA ligase.